The sequence spans 468 residues: 3-isopropylmalate dehydratase large subunit (468 aa).

Cysteine 347, cysteine 407, and cysteine 410 together coordinate [4Fe-4S] cluster.

Belongs to the aconitase/IPM isomerase family. LeuC type 1 subfamily. In terms of assembly, heterodimer of LeuC and LeuD. The cofactor is [4Fe-4S] cluster.

It carries out the reaction (2R,3S)-3-isopropylmalate = (2S)-2-isopropylmalate. It participates in amino-acid biosynthesis; L-leucine biosynthesis; L-leucine from 3-methyl-2-oxobutanoate: step 2/4. Its function is as follows. Catalyzes the isomerization between 2-isopropylmalate and 3-isopropylmalate, via the formation of 2-isopropylmaleate. This is 3-isopropylmalate dehydratase large subunit from Campylobacter jejuni subsp. jejuni serotype O:23/36 (strain 81-176).